Consider the following 391-residue polypeptide: MEQAILRINNISSQLTGKCPFKAHGGGAGKCPYKLGGGQILDQSKAWSLVNVTANVDQVTPIKVLVTGAAGQIAYSLMFMIASGQMFGPHQPVILHLLDIPKMADALKGVVMELQDCSYPLLQSVVATTDIQTAFLHINVAILVGAFPRGPGMQRKDLLKVNVSIFKEQGEALNKYASRGVKVLVVGNPANTNALTALMKASDLPTSNFSALTRLDQNRAQSMISEKVGTNVDNVHNVIIWGNHSQTQVPDVNHGYILNYPNRGLIEPIPSSVNDDKWLNEQFIPLVQNRGATVIAARKLSSAASAANAIVGHVRDWLLGTKDGEHVSMAVYSDGSYNVPKGLIFSFPVTCHNGQWTIVQGLKINSSTQQKIDATIKELQEEKETAMSFLN.

68–74 (GAAGQIA) is a binding site for NAD(+). Positions 149 and 155 each coordinate substrate. NAD(+) is bound by residues N162, Q169, and 186 to 188 (VGN). N188 and R219 together coordinate substrate. Residue H244 is the Proton acceptor of the active site.

It belongs to the LDH/MDH superfamily. MDH type 2 family. As to quaternary structure, homodimer.

It catalyses the reaction (S)-malate + NAD(+) = oxaloacetate + NADH + H(+). In terms of biological role, catalyzes the reversible oxidation of malate to oxaloacetate. This chain is Probable malate dehydrogenase 1 (mdhA), found in Dictyostelium discoideum (Social amoeba).